The primary structure comprises 210 residues: ATP-dependent dethiobiotin synthetase BioD (210 aa).

13–18 serves as a coordination point for ATP; sequence DVGKTV. Thr17 contacts Mg(2+). Lys33 is an active-site residue. Arg47 and Glu101 together coordinate Mg(2+). Residues 101-104 and 185-187 contribute to the ATP site; these read EGAG and PPL.

It belongs to the dethiobiotin synthetase family. In terms of assembly, homodimer. It depends on Mg(2+) as a cofactor.

Its subcellular location is the cytoplasm. It catalyses the reaction (7R,8S)-7,8-diammoniononanoate + CO2 + ATP = (4R,5S)-dethiobiotin + ADP + phosphate + 3 H(+). The protein operates within cofactor biosynthesis; biotin biosynthesis; biotin from 7,8-diaminononanoate: step 1/2. In terms of biological role, catalyzes a mechanistically unusual reaction, the ATP-dependent insertion of CO2 between the N7 and N8 nitrogen atoms of 7,8-diaminopelargonic acid (DAPA, also called 7,8-diammoniononanoate) to form a ureido ring. This is ATP-dependent dethiobiotin synthetase BioD from Afipia carboxidovorans (strain ATCC 49405 / DSM 1227 / KCTC 32145 / OM5) (Oligotropha carboxidovorans).